Here is a 205-residue protein sequence, read N- to C-terminus: Ras-related protein RABC2b (205 aa).

GTP is bound at residue Gly20 to Ser27. The short motif at Leu41–Phe49 is the Effector region element. Residues Asp67–Gln71, Asn127–Asp130, and Ser157–Ala158 contribute to the GTP site. S-geranylgeranyl cysteine attachment occurs at residues Cys202 and Cys203.

It belongs to the small GTPase superfamily. Rab family.

The protein localises to the cell membrane. Functionally, intracellular vesicle trafficking and protein transport. This chain is Ras-related protein RABC2b (RABC2B), found in Arabidopsis thaliana (Mouse-ear cress).